We begin with the raw amino-acid sequence, 255 residues long: 2-(S)-hydroxypropyl-CoM dehydrogenase 3 (255 aa).

Residues Ile19, Asp38, 64–65 (DV), and Asn91 contribute to the NAD(+) site. Positions 143 and 156 each coordinate (S)-2-hydroxypropyl-coenzyme M. Tyr156 (proton acceptor) is an active-site residue. Residue Lys160 coordinates NAD(+). (S)-2-hydroxypropyl-coenzyme M is bound at residue Thr188. 189–193 (VTSTG) is an NAD(+) binding site. Residue Tyr215 participates in (S)-2-hydroxypropyl-coenzyme M binding.

The protein belongs to the short-chain dehydrogenases/reductases (SDR) family. As to quaternary structure, homotetramer.

The enzyme catalyses (S)-2-hydroxypropyl-coenzyme M + NAD(+) = 2-oxopropyl-coenzyme M + NADH + H(+). With respect to regulation, not inhibited by 2-(2-methyl-2-hydroxypropylthio)ethanesulfonate (M-HPC), an achiral analog of both R-HPC and S-HPC. Functionally, involved in aliphatic epoxide carboxylation. Catalyzes the reversible oxidation of (2S)-2-hydroxypropyl-coenzyme M (S-HPC) to 2-oxopropyl-coenzyme M (2-KPC). The enzyme is highly specific for the S enantiomers. In vitro can also use the aliphatic ketone 2-butanone and the aliphatic alcohol 2-propanol, and shows an inherent stereoselectivity for 2-butanone reduction. The sequence is that of 2-(S)-hydroxypropyl-CoM dehydrogenase 3 from Xanthobacter autotrophicus (strain ATCC BAA-1158 / Py2).